We begin with the raw amino-acid sequence, 92 residues long: Phosphoribosyl-ATP pyrophosphatase (92 aa).

The protein belongs to the PRA-PH family.

It is found in the cytoplasm. It catalyses the reaction 1-(5-phospho-beta-D-ribosyl)-ATP + H2O = 1-(5-phospho-beta-D-ribosyl)-5'-AMP + diphosphate + H(+). It functions in the pathway amino-acid biosynthesis; L-histidine biosynthesis; L-histidine from 5-phospho-alpha-D-ribose 1-diphosphate: step 2/9. The polypeptide is Phosphoribosyl-ATP pyrophosphatase (Leptospira borgpetersenii serovar Hardjo-bovis (strain JB197)).